The following is a 249-amino-acid chain: Large ribosomal subunit protein uL22m (249 aa).

Residues 1–22 constitute a mitochondrion transit peptide; that stretch reads MKYINQFMKISKGFLVPSSTIG. Residues 70-98 form a disordered region; that stretch reads ANQKDDSNRQQKEERVKERPRSRISFKKQ. A compositionally biased stretch (basic and acidic residues) spans 72 to 98; that stretch reads QKDDSNRQQKEERVKERPRSRISFKKQ.

Belongs to the universal ribosomal protein uL22 family. In terms of assembly, component of the mitochondrial large ribosomal subunit (mt-LSU). Mature yeast 74S mitochondrial ribosomes consist of a small (37S) and a large (54S) subunit. The 37S small subunit contains a 15S ribosomal RNA (15S mt-rRNA) and at least 32 different proteins. The 54S large subunit contains a 21S rRNA (21S mt-rRNA) and at least 45 different proteins. uL22m forms the wall of the exit tunnel.

Its subcellular location is the mitochondrion. Its function is as follows. Component of the mitochondrial ribosome (mitoribosome), a dedicated translation machinery responsible for the synthesis of mitochondrial genome-encoded proteins, including at least some of the essential transmembrane subunits of the mitochondrial respiratory chain. The mitoribosomes are attached to the mitochondrial inner membrane and translation products are cotranslationally integrated into the membrane. In Schizosaccharomyces pombe (strain 972 / ATCC 24843) (Fission yeast), this protein is Large ribosomal subunit protein uL22m (mrpl22).